The sequence spans 909 residues: Protein translocase subunit SecA (909 aa).

ATP is bound by residues glutamine 87, 105–109, and aspartate 513; that span reads GEGKT. The tract at residues 834–909 is disordered; sequence QEEVERMEEQ…KYKQCHGKID (76 aa). Over residues 836–853 the composition is skewed to basic and acidic residues; sequence EVERMEEQRRAQAEEAAR. Residues 854–863 show a composition bias toward low complexity; sequence RAQAQHAAAQ. Basic and acidic residues predominate over residues 874–889; that stretch reads EGAHQPMVREERKVGR. Zn(2+) is bound by residues cysteine 893, cysteine 895, cysteine 904, and histidine 905. A compositionally biased stretch (basic residues) spans 899-909; that stretch reads KKYKQCHGKID.

It belongs to the SecA family. As to quaternary structure, monomer and homodimer. Part of the essential Sec protein translocation apparatus which comprises SecA, SecYEG and auxiliary proteins SecDF-YajC and YidC. Requires Zn(2+) as cofactor.

The protein resides in the cell inner membrane. It is found in the cytoplasm. It carries out the reaction ATP + H2O + cellular proteinSide 1 = ADP + phosphate + cellular proteinSide 2.. Its function is as follows. Part of the Sec protein translocase complex. Interacts with the SecYEG preprotein conducting channel. Has a central role in coupling the hydrolysis of ATP to the transfer of proteins into and across the cell membrane, serving both as a receptor for the preprotein-SecB complex and as an ATP-driven molecular motor driving the stepwise translocation of polypeptide chains across the membrane. The protein is Protein translocase subunit SecA of Vibrio campbellii (strain ATCC BAA-1116).